We begin with the raw amino-acid sequence, 365 residues long: uncharacterized protein (365 aa).

The protein belongs to the NAD(P)-dependent epimerase/dehydratase family.

The protein resides in the cytoplasm. It localises to the nucleus. This is an uncharacterized protein from Schizosaccharomyces pombe (strain 972 / ATCC 24843) (Fission yeast).